Reading from the N-terminus, the 146-residue chain is MEKKVTIYTDGACSGNPGPGGWGAMLMYGKTVREISGGAPATTNNRMELSAAIEALQALKEPCTVDLYSDSSYLVNAINEGWLKRWTANRWKTAAKKTVENIDLWQKILELTDRHRVRFHKVKGHSDNPYNNRCDELARLAVRKKP.

The region spanning methionine 1–arginine 143 is the RNase H type-1 domain. Mg(2+) contacts are provided by aspartate 10, glutamate 48, aspartate 70, and aspartate 135.

This sequence belongs to the RNase H family. As to quaternary structure, monomer. Mg(2+) is required as a cofactor.

The protein localises to the cytoplasm. It catalyses the reaction Endonucleolytic cleavage to 5'-phosphomonoester.. In terms of biological role, endonuclease that specifically degrades the RNA of RNA-DNA hybrids. The sequence is that of Ribonuclease H from Chlorobium phaeovibrioides (strain DSM 265 / 1930) (Prosthecochloris vibrioformis (strain DSM 265)).